A 562-amino-acid polypeptide reads, in one-letter code: Phosphoglucomutase-1 (562 aa).

Methionine 1 is subject to N-acetylmethionine. Position 16 is an N6-acetyllysine (lysine 16). Arginine 23 serves as a coordination point for alpha-D-glucose 1,6-bisphosphate. A Phosphothreonine modification is found at threonine 115. Serine 117 is an alpha-D-glucose 1,6-bisphosphate binding site. The active-site Phosphoserine intermediate is serine 117. Serine 117 is a binding site for Mg(2+). Serine 117 and serine 134 each carry phosphoserine. Threonine 185 carries the post-translational modification Phosphothreonine. Phosphoserine occurs at positions 201, 206, and 213. 3 residues coordinate Mg(2+): aspartate 288, aspartate 290, and aspartate 292. 2 residues coordinate alpha-D-glucose 1,6-bisphosphate: aspartate 292 and arginine 293. Lysine 349 is modified (N6-acetyllysine). Tyrosine 353 is subject to Phosphotyrosine. Position 357 (threonine 357) interacts with alpha-D-glucose 1,6-bisphosphate. Residue serine 369 is modified to Phosphoserine. Alpha-D-glucose 1,6-bisphosphate is bound by residues glutamate 376, serine 378, and lysine 389. Residue serine 378 is modified to Phosphoserine. Residue lysine 419 is modified to N6-succinyllysine. Threonine 467 carries the phosphothreonine; by PAK1 modification. Residues serine 477, serine 485, and serine 505 each carry the phosphoserine modification. At threonine 507 the chain carries Phosphothreonine. Phosphoserine occurs at positions 509 and 541.

It belongs to the phosphohexose mutase family. Monomer. Mg(2+) is required as a cofactor. Phosphorylation at Thr-467 by PAK1 significantly enhances enzymatic activity.

It localises to the cytoplasm. The enzyme catalyses alpha-D-glucose 1-phosphate = alpha-D-glucose 6-phosphate. It carries out the reaction O-phospho-L-seryl-[protein] + alpha-D-glucose 1-phosphate = alpha-D-glucose 1,6-bisphosphate + L-seryl-[protein]. The catalysed reaction is alpha-D-glucose 1,6-bisphosphate + L-seryl-[protein] = O-phospho-L-seryl-[protein] + alpha-D-glucose 6-phosphate. Glucose-1,6-bisphosphate enhances phosphorylation of the active site Ser-117, and thereby increases enzyme activity. Functionally, catalyzes the reversible isomerization of alpha-D-glucose 1-phosphate to alpha-D-glucose 6-phosphate. The mechanism proceeds via the intermediate compound alpha-D-glucose 1,6-bisphosphate. This enzyme participates in both the breakdown and synthesis of glucose. The polypeptide is Phosphoglucomutase-1 (PGM1) (Homo sapiens (Human)).